We begin with the raw amino-acid sequence, 750 residues long: Xylosyl- and glucuronyltransferase LARGE2s (750 aa).

Over 1–10 (MLCPCRGKLK) the chain is Cytoplasmic. The helical; Signal-anchor for type II membrane protein transmembrane segment at 11–31 (LLVVSLSFVILFTWLYLLVGN) threads the bilayer. At 32 to 750 (SENGRSLLLS…LKYLTAQRNI (719 aa)) the chain is on the lumenal side. N116, N142, and N228 each carry an N-linked (GlcNAc...) asparagine glycan. Residues 132–407 (LHVACVCAGH…FLEYDGNLLR (276 aa)) form a xylosyltransferase activity region. Residues D236 and D238 each coordinate Mn(2+). N-linked (GlcNAc...) asparagine glycosylation occurs at N266. Residues 408–750 (RELFGCPSQA…LKYLTAQRNI (343 aa)) are glucuronyltransferase activity. D557 and D559 together coordinate Mn(2+).

The protein in the C-terminal section; belongs to the glycosyltransferase 49 family. In the N-terminal section; belongs to the glycosyltransferase 8 family. The cofactor is Mn(2+).

The protein resides in the golgi apparatus membrane. It catalyses the reaction 3-O-[beta-D-GlcA-(1-&gt;3)-beta-D-Xyl-(1-&gt;4)-Rib-ol-P-Rib-ol-P-3-beta-D-GalNAc-(1-&gt;3)-beta-D-GlcNAc-(1-&gt;4)-(O-6-P-alpha-D-Man)]-Thr-[protein] + UDP-alpha-D-xylose = 3-O-[alpha-D-Xyl-(1-&gt;3)-beta-D-GlcA-(1-&gt;4)-beta-D-Xyl-(1-&gt;4)-Rib-ol-P-Rib-ol-P-3-beta-D-GalNAc-(1-&gt;3)-beta-D-GlcNAc-(1-&gt;4)-(O-6-P-alpha-D-Man)]-Thr-[protein] + UDP + H(+). It carries out the reaction 3-O-{(1-&gt;[3)-alpha-D-Xyl-(1-&gt;3)-beta-D-GlcA-(1-&gt;](n)-4)-beta-D-Xyl-(1-&gt;4)-Rib-ol-P-Rib-ol-P-3-beta-D-GalNAc-(1-&gt;3)-beta-D-GlcNAc-(1-&gt;4)-O-6-P-alpha-D-Man}-L-Thr-[protein] + UDP-alpha-D-glucuronate = 3-O-{beta-D-GlcA-(1-&gt;[3)-alpha-D-Xyl-(1-&gt;3)-beta-D-GlcA-(1-&gt;](n)-4)-beta-D-Xyl-(1-&gt;4)-Rib-ol-P-Rib-ol-P-3-beta-D-GalNAc-(1-&gt;3)-beta-D-GlcNAc-(1-&gt;4)-O-6-P-alpha-D-Man}-L-Thr-[protein] + UDP + H(+). The enzyme catalyses 3-O-{beta-D-GlcA-(1-&gt;[3)-alpha-D-Xyl-(1-&gt;3)-beta-D-GlcA-(1-&gt;](n)-4)-beta-D-Xyl-(1-&gt;4)-Rib-ol-P-Rib-ol-P-3-beta-D-GalNAc-(1-&gt;3)-beta-D-GlcNAc-(1-&gt;4)-O-6-P-alpha-D-Man}-L-Thr-[protein] + UDP-alpha-D-xylose = 3-O-{(1-&gt;[3)-alpha-D-Xyl-(1-&gt;3)-beta-D-GlcA-(1-&gt;](n+1)-4)-beta-D-Xyl-(1-&gt;4)-Rib-ol-P-Rib-ol-P-3-beta-D-GalNAc-(1-&gt;3)-beta-D-GlcNAc-(1-&gt;4)-O-6-P-alpha-D-Man}-L-Thr-[protein] + UDP + H(+). The protein operates within protein modification; protein glycosylation. Its function is as follows. Bifunctional glycosyltransferase with both alpha-1,3-xylosyltransferase and beta-1,3-glucuronyltransferase activities involved in the maturation of alpha-dystroglycan (DAG1) by glycosylation leading to DAG1 binding to laminin G-like domain-containing extracellular proteins with high affinity and in a phosphorylated-O-mannosyl trisaccharide dependent manner. Elongates the glucuronyl-beta-1,4-xylose-beta disaccharide primer structure by adding repeating units [-3-Xylose-alpha-1,3-GlcA-beta-1-] to produce a heteropolysaccharide. Supports the maturation of DAG1 more effectively than LARGE1. In addition, can modify both heparan sulfate (HS)- and chondroitin/dermatan sulfate (CS/DS)-proteoglycans (PGs), namely GPC4, with a glycosaminoglycan (GAG)-like polysaccharide composed of xylose and glucuronic acid to confer laminin binding. The sequence is that of Xylosyl- and glucuronyltransferase LARGE2s from Danio rerio (Zebrafish).